Consider the following 243-residue polypeptide: ATP synthase subunit a (243 aa).

7 helical membrane-spanning segments follow: residues 29–49 (NASL…YIGL), 54–74 (IIPN…VSTI), 89–109 (VFTI…PLGF), 114–134 (HIAV…IIGF), 144–164 (ILLP…IELF), 182–202 (IAGH…NIFL), and 208–228 (IFII…AYIF).

It belongs to the ATPase A chain family. As to quaternary structure, F-type ATPases have 2 components, CF(1) - the catalytic core - and CF(0) - the membrane proton channel. CF(1) has five subunits: alpha(3), beta(3), gamma(1), delta(1), epsilon(1). CF(0) has three main subunits: a(1), b(2) and c(9-12). The alpha and beta chains form an alternating ring which encloses part of the gamma chain. CF(1) is attached to CF(0) by a central stalk formed by the gamma and epsilon chains, while a peripheral stalk is formed by the delta and b chains.

The protein localises to the cell inner membrane. In terms of biological role, key component of the proton channel; it plays a direct role in the translocation of protons across the membrane. The sequence is that of ATP synthase subunit a from Ehrlichia canis (strain Jake).